The primary structure comprises 645 residues: Glucans biosynthesis glucosyltransferase H (645 aa).

Residues 1–12 (MDGTVTLSSTPT) show a composition bias toward polar residues. The interval 1–22 (MDGTVTLSSTPTAIPPVSALDA) is disordered. A run of 7 helical transmembrane segments spans residues 64–84 (LIGGTFAATAVAVWVMLSVLW), 98–118 (LFTLLFAWIAMSFASAVAGFV), 423–443 (APMWGLLMLIGIGIPLAGVGI), 465–485 (AIWIFICTMFVLLAPKLLGYI), 504–524 (AVSILLETVLAALMAPVVMYL), 559–579 (YGGLTVFGLFMGAVAYAVSPA), and 580–600 (LAAWMGPVIVGMALSIPVVAL).

It belongs to the glycosyltransferase 2 family. OpgH subfamily.

The protein resides in the cell inner membrane. The protein operates within glycan metabolism; osmoregulated periplasmic glucan (OPG) biosynthesis. Its function is as follows. Involved in the biosynthesis of osmoregulated periplasmic glucans (OPGs). The protein is Glucans biosynthesis glucosyltransferase H of Xanthomonas oryzae pv. oryzae (strain MAFF 311018).